Reading from the N-terminus, the 382-residue chain is Galactokinase (382 aa).

34-37 contributes to the substrate binding site; sequence EHTD. Position 124–130 (124–130) interacts with ATP; that stretch reads GAGLSSS. Ser130 and Glu162 together coordinate Mg(2+). Asp174 serves as the catalytic Proton acceptor. Position 223 (Tyr223) interacts with substrate.

Belongs to the GHMP kinase family. GalK subfamily.

The protein localises to the cytoplasm. It carries out the reaction alpha-D-galactose + ATP = alpha-D-galactose 1-phosphate + ADP + H(+). It participates in carbohydrate metabolism; galactose metabolism. Catalyzes the transfer of the gamma-phosphate of ATP to D-galactose to form alpha-D-galactose-1-phosphate (Gal-1-P). This chain is Galactokinase, found in Shigella flexneri serotype 5b (strain 8401).